A 1066-amino-acid chain; its full sequence is Carbamoyl phosphate synthase large chain (1066 aa).

The tract at residues Met-1–Glu-401 is carboxyphosphate synthetic domain. The ATP site is built by Arg-129, Arg-169, Gly-175, Gly-176, Arg-208, Ile-210, Glu-215, Gly-241, Val-242, His-243, Gln-284, and Glu-298. The ATP-grasp 1 domain occupies Lys-133 to Leu-327. Gln-284, Glu-298, and Asn-300 together coordinate Mg(2+). Gln-284, Glu-298, and Asn-300 together coordinate Mn(2+). The tract at residues Gln-402–Val-547 is oligomerization domain. The carbamoyl phosphate synthetic domain stretch occupies residues Asp-548–Gly-931. The 191-residue stretch at Asp-673–Leu-863 folds into the ATP-grasp 2 domain. Positions 709, 748, 750, 754, 779, 780, 781, 782, 822, and 834 each coordinate ATP. Residues Gln-822, Glu-834, and Asn-836 each coordinate Mg(2+). Gln-822, Glu-834, and Asn-836 together coordinate Mn(2+). Residues Ile-932 to Ile-1066 enclose the MGS-like domain. Residues Ile-932–Ile-1066 are allosteric domain.

It belongs to the CarB family. Composed of two chains; the small (or glutamine) chain promotes the hydrolysis of glutamine to ammonia, which is used by the large (or ammonia) chain to synthesize carbamoyl phosphate. Tetramer of heterodimers (alpha,beta)4. Mg(2+) serves as cofactor. The cofactor is Mn(2+).

It catalyses the reaction hydrogencarbonate + L-glutamine + 2 ATP + H2O = carbamoyl phosphate + L-glutamate + 2 ADP + phosphate + 2 H(+). The catalysed reaction is hydrogencarbonate + NH4(+) + 2 ATP = carbamoyl phosphate + 2 ADP + phosphate + 2 H(+). It participates in amino-acid biosynthesis; L-arginine biosynthesis; carbamoyl phosphate from bicarbonate: step 1/1. Its pathway is pyrimidine metabolism; UMP biosynthesis via de novo pathway; (S)-dihydroorotate from bicarbonate: step 1/3. In terms of biological role, large subunit of the glutamine-dependent carbamoyl phosphate synthetase (CPSase). CPSase catalyzes the formation of carbamoyl phosphate from the ammonia moiety of glutamine, carbonate, and phosphate donated by ATP, constituting the first step of 2 biosynthetic pathways, one leading to arginine and/or urea and the other to pyrimidine nucleotides. The large subunit (synthetase) binds the substrates ammonia (free or transferred from glutamine from the small subunit), hydrogencarbonate and ATP and carries out an ATP-coupled ligase reaction, activating hydrogencarbonate by forming carboxy phosphate which reacts with ammonia to form carbamoyl phosphate. The chain is Carbamoyl phosphate synthase large chain from Lachnoclostridium phytofermentans (strain ATCC 700394 / DSM 18823 / ISDg) (Clostridium phytofermentans).